A 148-amino-acid polypeptide reads, in one-letter code: Arginine repressor (148 aa).

The protein belongs to the ArgR family.

It localises to the cytoplasm. Its pathway is amino-acid biosynthesis; L-arginine biosynthesis [regulation]. Its function is as follows. Regulates arginine biosynthesis genes. The sequence is that of Arginine repressor from Chlorobium limicola (strain DSM 245 / NBRC 103803 / 6330).